Reading from the N-terminus, the 219-residue chain is Transcriptional regulatory protein QseB (219 aa).

A Response regulatory domain is found at 2-116 (RILLIEDDML…EVAARLEALM (115 aa)). At Asp-51 the chain carries 4-aspartylphosphate. The segment at residues 124 to 218 (SNELRHGNVM…VHGIGYTLGE (95 aa)) is a DNA-binding region (ompR/PhoB-type).

Post-translationally, phosphorylated by QseC.

It is found in the cytoplasm. In terms of biological role, member of a two-component regulatory system QseB/QseC. Activates the flagella regulon by activating transcription of FlhDC. Currently it is not known whether this effect is direct or not. This chain is Transcriptional regulatory protein QseB (qseB), found in Escherichia coli O157:H7.